The primary structure comprises 329 residues: tRNA N6-adenosine threonylcarbamoyltransferase (329 aa).

3 residues coordinate Fe cation: His108, His112, and Tyr129. Substrate-binding positions include 129-133 (YVSGG), Asp161, Glu182, and Ser261. A Fe cation-binding site is contributed by Asp289.

This sequence belongs to the KAE1 / TsaD family. Requires Fe(2+) as cofactor.

The protein resides in the cytoplasm. It catalyses the reaction L-threonylcarbamoyladenylate + adenosine(37) in tRNA = N(6)-L-threonylcarbamoyladenosine(37) in tRNA + AMP + H(+). In terms of biological role, required for the formation of a threonylcarbamoyl group on adenosine at position 37 (t(6)A37) in tRNAs that read codons beginning with adenine. Is probably involved in the transfer of the threonylcarbamoyl moiety of threonylcarbamoyl-AMP (TC-AMP) to the N6 group of A37. In Ignicoccus hospitalis (strain KIN4/I / DSM 18386 / JCM 14125), this protein is tRNA N6-adenosine threonylcarbamoyltransferase.